The following is a 749-amino-acid chain: Protein Niban 2 (749 aa).

G2 carries N-myristoyl glycine lipidation. One can recognise a PH domain in the interval 68 to 192; that stretch reads RIIFSGNLFQ…WQAVLQDCVR (125 aa). S568, S574, S607, S628, S647, S650, S669, S674, S685, S695, and S699 each carry phosphoserine. Positions 589–749 are disordered; it reads WGEQYGDSGD…EDSAGVQTEF (161 aa). The span at 710–719 shows a compositional bias: basic and acidic residues; sequence VDLEPPKPSD. Polar residues predominate over residues 723–749; that stretch reads GEQVSSPGSRPPIHTTTEDSAGVQTEF.

This sequence belongs to the Niban family. In terms of processing, as apoptosis proceeds, degraded via an proteasome-independent pathway, probably by caspases.

It localises to the cytoplasm. The protein localises to the cytosol. Its subcellular location is the cell junction. The protein resides in the adherens junction. It is found in the membrane. May play a role in apoptosis suppression. The sequence is that of Protein Niban 2 from Mus musculus (Mouse).